The chain runs to 385 residues: tRNA 2-selenouridine synthase (385 aa).

The Rhodanese domain maps to 15-138 (FIADTPLIDV…ARQFLISTID (124 aa)). C98 serves as the catalytic S-selanylcysteine intermediate.

It belongs to the SelU family. Monomer.

The catalysed reaction is 5-methylaminomethyl-2-thiouridine(34) in tRNA + selenophosphate + (2E)-geranyl diphosphate + H2O + H(+) = 5-methylaminomethyl-2-selenouridine(34) in tRNA + (2E)-thiogeraniol + phosphate + diphosphate. It catalyses the reaction 5-methylaminomethyl-2-thiouridine(34) in tRNA + (2E)-geranyl diphosphate = 5-methylaminomethyl-S-(2E)-geranyl-thiouridine(34) in tRNA + diphosphate. It carries out the reaction 5-methylaminomethyl-S-(2E)-geranyl-thiouridine(34) in tRNA + selenophosphate + H(+) = 5-methylaminomethyl-2-(Se-phospho)selenouridine(34) in tRNA + (2E)-thiogeraniol. The enzyme catalyses 5-methylaminomethyl-2-(Se-phospho)selenouridine(34) in tRNA + H2O = 5-methylaminomethyl-2-selenouridine(34) in tRNA + phosphate. Functionally, involved in the post-transcriptional modification of the uridine at the wobble position (U34) of tRNA(Lys), tRNA(Glu) and tRNA(Gln). Catalyzes the conversion of 2-thiouridine (S2U-RNA) to 2-selenouridine (Se2U-RNA). Acts in a two-step process involving geranylation of 2-thiouridine (S2U) to S-geranyl-2-thiouridine (geS2U) and subsequent selenation of the latter derivative to 2-selenouridine (Se2U) in the tRNA chain. In Nitrosomonas europaea (strain ATCC 19718 / CIP 103999 / KCTC 2705 / NBRC 14298), this protein is tRNA 2-selenouridine synthase.